The sequence spans 209 residues: Large ribosomal subunit protein uL3 (209 aa).

Q150 is modified (N5-methylglutamine).

This sequence belongs to the universal ribosomal protein uL3 family. As to quaternary structure, part of the 50S ribosomal subunit. Forms a cluster with proteins L14 and L19. Methylated by PrmB.

Functionally, one of the primary rRNA binding proteins, it binds directly near the 3'-end of the 23S rRNA, where it nucleates assembly of the 50S subunit. This chain is Large ribosomal subunit protein uL3, found in Pasteurella multocida (strain Pm70).